Reading from the N-terminus, the 418-residue chain is uncharacterized protein (418 aa).

The interval 1 to 24 is disordered; sequence MSGTAGFITVSPGPPTEAPGGFPR.

The protein to A.pernix APE_1276 and S.solfataricus SSO2105.

This is an uncharacterized protein from Aeropyrum pernix (strain ATCC 700893 / DSM 11879 / JCM 9820 / NBRC 100138 / K1).